The following is a 224-amino-acid chain: Ribonuclease HII (224 aa).

The 211-residue stretch at 7–217 (STIMGIDEAG…SNAVIADCLQ (211 aa)) folds into the RNase H type-2 domain. Positions 13, 14, and 111 each coordinate a divalent metal cation.

Belongs to the RNase HII family. Mn(2+) is required as a cofactor. Mg(2+) serves as cofactor.

It localises to the cytoplasm. The enzyme catalyses Endonucleolytic cleavage to 5'-phosphomonoester.. In terms of biological role, endonuclease that specifically degrades the RNA of RNA-DNA hybrids. The protein is Ribonuclease HII of Methanocella arvoryzae (strain DSM 22066 / NBRC 105507 / MRE50).